A 321-amino-acid polypeptide reads, in one-letter code: D-alanine--D-alanine ligase (321 aa).

The 195-residue stretch at 121–315 (RIWFLTNNIN…FTNLIEEIIK (195 aa)) folds into the ATP-grasp domain. Residue 147 to 199 (PMKRPYVIKPLTQGSSIGVEVIFAEDDFNFADYDFPYGDQVIIEQYIKGRELQ) participates in ATP binding. Residues Glu268, Glu282, and Asn284 each contribute to the Mg(2+) site.

It belongs to the D-alanine--D-alanine ligase family. Mg(2+) is required as a cofactor. Requires Mn(2+) as cofactor.

It is found in the cytoplasm. It catalyses the reaction 2 D-alanine + ATP = D-alanyl-D-alanine + ADP + phosphate + H(+). It functions in the pathway cell wall biogenesis; peptidoglycan biosynthesis. In terms of biological role, cell wall formation. The polypeptide is D-alanine--D-alanine ligase (Rickettsia africae (strain ESF-5)).